The following is a 93-amino-acid chain: Small ribosomal subunit protein uS19 (93 aa).

A disordered region spans residues 1–23 (MPRSLKKGPFVDDHLQKKVDAEN). The segment covering 9 to 23 (PFVDDHLQKKVDAEN) has biased composition (basic and acidic residues).

This sequence belongs to the universal ribosomal protein uS19 family.

Protein S19 forms a complex with S13 that binds strongly to the 16S ribosomal RNA. This chain is Small ribosomal subunit protein uS19, found in Nocardioides sp. (strain ATCC BAA-499 / JS614).